Here is a 156-residue protein sequence, read N- to C-terminus: MPRRRVVAAREILPDPKFSSQTIAKFMNHVMQDGKKSIAESIVYGALERVQEKNKVDPVEFFETTLEKVRPMVEVKARRVGGATYQVPMEVRPSRRTALAMRWLVDAAAKRSEKTMALRLAGELLDAAEGKGAAIKKREDVHRMAEANKAFSHYRF.

This sequence belongs to the universal ribosomal protein uS7 family. As to quaternary structure, part of the 30S ribosomal subunit. Contacts proteins S9 and S11.

In terms of biological role, one of the primary rRNA binding proteins, it binds directly to 16S rRNA where it nucleates assembly of the head domain of the 30S subunit. Is located at the subunit interface close to the decoding center, probably blocks exit of the E-site tRNA. The protein is Small ribosomal subunit protein uS7 of Acinetobacter baumannii (strain AB307-0294).